We begin with the raw amino-acid sequence, 244 residues long: Type III pantothenate kinase (244 aa).

8-15 (DQGNSACK) serves as a coordination point for ATP. Substrate contacts are provided by residues tyrosine 88 and 94-97 (GADR). Aspartate 96 acts as the Proton acceptor in catalysis. Aspartate 117 serves as a coordination point for K(+). Threonine 120 is an ATP binding site. Residue threonine 175 coordinates substrate.

This sequence belongs to the type III pantothenate kinase family. Homodimer. It depends on NH4(+) as a cofactor. Requires K(+) as cofactor.

The protein resides in the cytoplasm. The enzyme catalyses (R)-pantothenate + ATP = (R)-4'-phosphopantothenate + ADP + H(+). Its pathway is cofactor biosynthesis; coenzyme A biosynthesis; CoA from (R)-pantothenate: step 1/5. Functionally, catalyzes the phosphorylation of pantothenate (Pan), the first step in CoA biosynthesis. This is Type III pantothenate kinase from Porphyromonas gingivalis (strain ATCC BAA-308 / W83).